The sequence spans 984 residues: Ephrin type-B receptor 1 (984 aa).

A signal peptide spans 1–17 (MALDCLLLFLLASAVAA). Topologically, residues 18 to 540 (MEETLMDTRT…YKSELREQLP (523 aa)) are extracellular. The Eph LBD domain occupies 19 to 201 (EETLMDTRTA…FFKKCPSIVQ (183 aa)). Fibronectin type-III domains lie at 322–432 (VPSG…TNQA) and 433–528 (APST…TLTD). N-linked (GlcNAc...) asparagine glycans are attached at residues N334, N426, and N480. A helical transmembrane segment spans residues 541–563 (LIAGSAAAGVVFVVSLVAISIVC). The Cytoplasmic portion of the chain corresponds to 564 to 984 (SRKRAYSKEA…QMNQSPSVMA (421 aa)). Residue Y600 is modified to Phosphotyrosine. Positions 619–882 (VKIEEVIGAG…EIVNTLDKMI (264 aa)) constitute a Protein kinase domain. ATP is bound by residues 625–633 (IGAGEFGEV) and K651. The Proton acceptor role is filled by D744. Residues 911–975 (TAFTTVDDWL…LSSIHSMRVQ (65 aa)) enclose the SAM domain. A Phosphotyrosine; by autocatalysis modification is found at Y928. Residues 982–984 (VMA) carry the PDZ-binding motif.

It belongs to the protein kinase superfamily. Tyr protein kinase family. Ephrin receptor subfamily. Heterotetramer upon binding of the ligand. The heterotetramer is composed of an ephrin dimer and a receptor dimer. Oligomerization is probably required to induce biological responses. Interacts with EPHB6; transphosphorylates EPHB6 to form an active signaling complex. Interacts with PICK1. Interacts (through Tyr-594) with NCK1 (via SH2 domain); activates the JUN cascade to regulate cell adhesion. The ligand-activated form interacts (through Tyr-928) with GRB7 and GRB10 (via SH2 domains). The ligand-activated form interacts (residues within the catalytic domain) with GRB2 (via SH2 domain). Interacts with GRB2, SHC1 and SRC; activates the MAPK/ERK cascade to regulate cell migration. Interacts with CBL; regulates receptor degradation through ubiquitination. Interacts with ACP1. Phosphorylated. Autophosphorylation is stimulated by the ligand EFNB1. Required for interaction with SH2 domain-containing interactors, for activation of the MAPK/ERK and JUN signaling cascades and for ubiquitination by CBL. In terms of processing, ubiquitinated; (EFNB1)ligand-induced poly- and/or multi-ubiquitination by CBL is regulated by SRC and leads to lysosomal degradation. In terms of tissue distribution, restricted to brain and testes.

The protein localises to the cell membrane. Its subcellular location is the early endosome membrane. It localises to the cell projection. The protein resides in the dendrite. The enzyme catalyses L-tyrosyl-[protein] + ATP = O-phospho-L-tyrosyl-[protein] + ADP + H(+). Its function is as follows. Receptor tyrosine kinase which binds promiscuously transmembrane ephrin-B family ligands residing on adjacent cells, leading to contact-dependent bidirectional signaling into neighboring cells. The signaling pathway downstream of the receptor is referred to as forward signaling while the signaling pathway downstream of the ephrin ligand is referred to as reverse signaling. Cognate/functional ephrin ligands for this receptor include EFNB1, EFNB2 and EFNB3. During nervous system development, regulates retinal axon guidance redirecting ipsilaterally ventrotemporal retinal ganglion cells axons at the optic chiasm midline. This probably requires repulsive interaction with EFNB2. In the adult nervous system together with EFNB3, regulates chemotaxis, proliferation and polarity of the hippocampus neural progenitors. In addition to its role in axon guidance also plays an important redundant role with other ephrin-B receptors in development and maturation of dendritic spines and synapse formation. May also regulate angiogenesis. More generally, may play a role in targeted cell migration and adhesion. Upon activation by EFNB1 and probably other ephrin-B ligands activates the MAPK/ERK and the JNK signaling cascades to regulate cell migration and adhesion respectively. Involved in the maintenance of the pool of satellite cells (muscle stem cells) by promoting their self-renewal and reducing their activation and differentiation. The chain is Ephrin type-B receptor 1 (Ephb1) from Rattus norvegicus (Rat).